A 195-amino-acid polypeptide reads, in one-letter code: Probable GTP-binding protein EngB (195 aa).

An EngB-type G domain is found at 22 to 195; sequence GRPEVALAGR…WAALLPFVAS (174 aa). GTP contacts are provided by residues 30-37, 57-61, 75-78, 142-145, and 174-176; these read GRSNVGKS, GKTQT, DVPG, TKAD, and FSA. 2 residues coordinate Mg(2+): S37 and T59.

It belongs to the TRAFAC class TrmE-Era-EngA-EngB-Septin-like GTPase superfamily. EngB GTPase family. Mg(2+) is required as a cofactor.

Its function is as follows. Necessary for normal cell division and for the maintenance of normal septation. The polypeptide is Probable GTP-binding protein EngB (Geobacillus kaustophilus (strain HTA426)).